Consider the following 448-residue polypeptide: Signal recognition particle protein (448 aa).

GTP is bound by residues 101–108, 182–186, and 240–243; these read GLQGSGKT, DSAGR, and SKFD.

It belongs to the GTP-binding SRP family. SRP54 subfamily. In terms of assembly, part of the signal recognition particle protein translocation system, which is composed of SRP and FtsY. SRP is a ribonucleoprotein composed of Ffh and a 4.5S RNA molecule.

It localises to the cytoplasm. The catalysed reaction is GTP + H2O = GDP + phosphate + H(+). Involved in targeting and insertion of nascent membrane proteins into the cytoplasmic membrane. Binds to the hydrophobic signal sequence of the ribosome-nascent chain (RNC) as it emerges from the ribosomes. The SRP-RNC complex is then targeted to the cytoplasmic membrane where it interacts with the SRP receptor FtsY. Interaction with FtsY leads to the transfer of the RNC complex to the Sec translocase for insertion into the membrane, the hydrolysis of GTP by both Ffh and FtsY, and the dissociation of the SRP-FtsY complex into the individual components. The polypeptide is Signal recognition particle protein (Helicobacter pylori (strain ATCC 700392 / 26695) (Campylobacter pylori)).